The chain runs to 514 residues: Probable transposase for insertion sequence element IS1353 (514 aa).

Residues 172 to 216 (KGDTSLEQRHEALLRELAELESQNQRLRMENAILEKASELIKKDM) adopt a coiled-coil conformation. Residues 346-510 (HASAPNTKWL…SPIEYRHAVG (165 aa)) enclose the Integrase catalytic domain. Positions 357 and 417 each coordinate Mg(2+).

It belongs to the transposase 8 family.

Its function is as follows. Probably involved in the transposition of insertion sequence IS1353. The polypeptide is Probable transposase for insertion sequence element IS1353 (Shigella flexneri).